A 152-amino-acid chain; its full sequence is Xanthine-guanine phosphoribosyltransferase (152 aa).

5-phospho-alpha-D-ribose 1-diphosphate is bound by residues 37 to 38 (RG) and 88 to 96 (DDLVDTGGT). Position 89 (Asp-89) interacts with Mg(2+). Asp-92 and Ile-135 together coordinate guanine. Residues Asp-92 and Ile-135 each coordinate xanthine. GMP is bound by residues 92–96 (DTGGT) and 134–135 (WI).

It belongs to the purine/pyrimidine phosphoribosyltransferase family. XGPT subfamily. In terms of assembly, homotetramer. Mg(2+) serves as cofactor.

It localises to the cell inner membrane. The enzyme catalyses GMP + diphosphate = guanine + 5-phospho-alpha-D-ribose 1-diphosphate. The catalysed reaction is XMP + diphosphate = xanthine + 5-phospho-alpha-D-ribose 1-diphosphate. It carries out the reaction IMP + diphosphate = hypoxanthine + 5-phospho-alpha-D-ribose 1-diphosphate. The protein operates within purine metabolism; GMP biosynthesis via salvage pathway; GMP from guanine: step 1/1. It participates in purine metabolism; XMP biosynthesis via salvage pathway; XMP from xanthine: step 1/1. Functionally, purine salvage pathway enzyme that catalyzes the transfer of the ribosyl-5-phosphate group from 5-phospho-alpha-D-ribose 1-diphosphate (PRPP) to the N9 position of the 6-oxopurines guanine and xanthine to form the corresponding ribonucleotides GMP (guanosine 5'-monophosphate) and XMP (xanthosine 5'-monophosphate), with the release of PPi. To a lesser extent, also acts on hypoxanthine. The chain is Xanthine-guanine phosphoribosyltransferase from Yersinia enterocolitica serotype O:8 / biotype 1B (strain NCTC 13174 / 8081).